Consider the following 162-residue polypeptide: NAD(P)H-quinone oxidoreductase subunit N (162 aa).

This sequence belongs to the complex I NdhN subunit family. As to quaternary structure, NDH-1 can be composed of about 15 different subunits; different subcomplexes with different compositions have been identified which probably have different functions.

The protein localises to the cellular thylakoid membrane. The enzyme catalyses a plastoquinone + NADH + (n+1) H(+)(in) = a plastoquinol + NAD(+) + n H(+)(out). The catalysed reaction is a plastoquinone + NADPH + (n+1) H(+)(in) = a plastoquinol + NADP(+) + n H(+)(out). In terms of biological role, NDH-1 shuttles electrons from an unknown electron donor, via FMN and iron-sulfur (Fe-S) centers, to quinones in the respiratory and/or the photosynthetic chain. The immediate electron acceptor for the enzyme in this species is believed to be plastoquinone. Couples the redox reaction to proton translocation, and thus conserves the redox energy in a proton gradient. Cyanobacterial NDH-1 also plays a role in inorganic carbon-concentration. The polypeptide is NAD(P)H-quinone oxidoreductase subunit N (Trichormus variabilis (strain ATCC 29413 / PCC 7937) (Anabaena variabilis)).